We begin with the raw amino-acid sequence, 614 residues long: Pyrophosphate--fructose 6-phosphate 1-phosphotransferase subunit alpha 1 (614 aa).

This sequence belongs to the phosphofructokinase type A (PFKA) family. PPi-dependent PFK group II subfamily. Clade 'Long' sub-subfamily. In terms of assembly, tetramer of two alpha (regulatory) and two beta (catalytic) chains. As to expression, expressed in leaves, roots, and flowers (e.g. sepals, petals, stamen and gynoecium).

Its subcellular location is the cytoplasm. The protein operates within carbohydrate degradation; glycolysis; D-glyceraldehyde 3-phosphate and glycerone phosphate from D-glucose: step 3/4. Allosterically activated by fructose 2,6-bisphosphate. Functionally, regulatory subunit of pyrophosphate--fructose 6-phosphate 1-phosphotransferase. The protein is Pyrophosphate--fructose 6-phosphate 1-phosphotransferase subunit alpha 1 of Arabidopsis thaliana (Mouse-ear cress).